The sequence spans 251 residues: Keratin-associated protein 10-10 (251 aa).

15 tandem repeats follow at residues cysteine 26–cysteine 30, cysteine 31–alanine 35, cysteine 52–alanine 56, cysteine 84–serine 88, cysteine 94–valine 98, cysteine 99–valine 103, cysteine 104–cysteine 109, cysteine 126–serine 130, cysteine 136–serine 140, cysteine 146–valine 150, cysteine 168–serine 172, cysteine 178–serine 182, cysteine 183–serine 187, cysteine 202–valine 206, and cysteine 220–alanine 224. The interval cysteine 26–alanine 224 is 15 X 5 AA repeats of C-C-X(3).

Belongs to the KRTAP type 10 family. Interacts with hair keratins. Restricted to a narrow region of the hair fiber cuticle, lying approximately 20 cell layers above the apex of the dermal papilla of the hair root; not detected in any other tissues.

Functionally, in the hair cortex, hair keratin intermediate filaments are embedded in an interfilamentous matrix, consisting of hair keratin-associated proteins (KRTAP), which are essential for the formation of a rigid and resistant hair shaft through their extensive disulfide bond cross-linking with abundant cysteine residues of hair keratins. The matrix proteins include the high-sulfur and high-glycine-tyrosine keratins. The protein is Keratin-associated protein 10-10 (KRTAP10-10) of Homo sapiens (Human).